We begin with the raw amino-acid sequence, 342 residues long: S-adenosylmethionine:tRNA ribosyltransferase-isomerase (342 aa).

It belongs to the QueA family. Monomer.

It localises to the cytoplasm. It catalyses the reaction 7-aminomethyl-7-carbaguanosine(34) in tRNA + S-adenosyl-L-methionine = epoxyqueuosine(34) in tRNA + adenine + L-methionine + 2 H(+). It participates in tRNA modification; tRNA-queuosine biosynthesis. Functionally, transfers and isomerizes the ribose moiety from AdoMet to the 7-aminomethyl group of 7-deazaguanine (preQ1-tRNA) to give epoxyqueuosine (oQ-tRNA). The polypeptide is S-adenosylmethionine:tRNA ribosyltransferase-isomerase (Streptococcus sanguinis (strain SK36)).